The primary structure comprises 381 residues: DNA double-strand break repair protein Mre11 (381 aa).

Mn(2+) is bound by residues aspartate 9, histidine 11, aspartate 50, and aspartate 85. The Proton donor role is filled by histidine 86. Residues histidine 156, histidine 187, and histidine 189 each contribute to the Mn(2+) site.

The protein belongs to the MRE11/RAD32 family. As to quaternary structure, homodimer. Forms a heterotetramer composed of two Mre11 subunits and two Rad50 subunits. It depends on Mn(2+) as a cofactor.

Nuclease activity is regulated by Rad50. Part of the Rad50/Mre11 complex, which is involved in the early steps of DNA double-strand break (DSB) repair. The complex may facilitate opening of the processed DNA ends to aid in the recruitment of HerA and NurA. Mre11 binds to DSB ends and has both double-stranded 3'-5' exonuclease activity and single-stranded endonuclease activity. The polypeptide is DNA double-strand break repair protein Mre11 (Saccharolobus solfataricus (strain ATCC 35092 / DSM 1617 / JCM 11322 / P2) (Sulfolobus solfataricus)).